The sequence spans 672 residues: tRNA 5-methylaminomethyl-2-thiouridine biosynthesis bifunctional protein MnmC (672 aa).

The tRNA (mnm(5)s(2)U34)-methyltransferase stretch occupies residues 1–235 (MTRVLEPAEP…KRDMTVARFA (235 aa)). Positions 259–672 (IGAGLAGCAV…SAGPGVDAAG (414 aa)) are FAD-dependent cmnm(5)s(2)U34 oxidoreductase.

The protein in the N-terminal section; belongs to the methyltransferase superfamily. tRNA (mnm(5)s(2)U34)-methyltransferase family. This sequence in the C-terminal section; belongs to the DAO family. FAD is required as a cofactor.

The protein resides in the cytoplasm. The enzyme catalyses 5-aminomethyl-2-thiouridine(34) in tRNA + S-adenosyl-L-methionine = 5-methylaminomethyl-2-thiouridine(34) in tRNA + S-adenosyl-L-homocysteine + H(+). Catalyzes the last two steps in the biosynthesis of 5-methylaminomethyl-2-thiouridine (mnm(5)s(2)U) at the wobble position (U34) in tRNA. Catalyzes the FAD-dependent demodification of cmnm(5)s(2)U34 to nm(5)s(2)U34, followed by the transfer of a methyl group from S-adenosyl-L-methionine to nm(5)s(2)U34, to form mnm(5)s(2)U34. The chain is tRNA 5-methylaminomethyl-2-thiouridine biosynthesis bifunctional protein MnmC from Cupriavidus metallidurans (strain ATCC 43123 / DSM 2839 / NBRC 102507 / CH34) (Ralstonia metallidurans).